A 220-amino-acid polypeptide reads, in one-letter code: Polyadenylate-binding protein 2 (220 aa).

Residues M1–E24 form a disordered region. The stretch at A34–Q74 forms a coiled coil. Residues S78–Y219 are necessary for homooligomerization. The RRM domain occupies R92–T168. Residues Q165–G172 carry the Nuclear localization signal motif.

Monomer and homooligomer. Binds RNA as a monomer and oligomerizes when bound to poly(A). Forms a complex with cleavage and polyadenylation specificity factor (CPSF) subunits PAPS2, FIPS5, PABN3 and PABN1. Interacts with CSP3.

It is found in the nucleus speckle. The protein resides in the cytoplasm. Its function is as follows. Involved in the 3'-end formation of mRNA precursors (pre-mRNA) by the addition of a poly(A) tail of 200-250 nt to the upstream cleavage product. Stimulates poly(A) polymerase (PAPOLA) conferring processivity on the poly(A) tail elongation reaction and also controls the poly(A) tail length. Increases the affinity of poly(A) polymerase for RNA. Binds to poly(A) and to poly(G) with high affinity. May protect the poly(A) tail from degradation. The polypeptide is Polyadenylate-binding protein 2 (Arabidopsis thaliana (Mouse-ear cress)).